Consider the following 314-residue polypeptide: uncharacterized protein (314 aa).

Residues 1–18 form the signal peptide; the sequence is MKVSLLIFLIILVGVIKS. Residues Asn-43, Asn-96, Asn-109, Asn-116, Asn-117, and Asn-161 are each glycosylated (N-linked (GlcNAc...) asparagine). Positions 252 to 314 are disordered; the sequence is SMRITKNNPH…PKSIDFHHLF (63 aa). 2 stretches are compositionally biased toward low complexity: residues 257–268 and 285–296; these read KNNPHLNNNNNN and KTTTKTSTKTTS.

The protein localises to the secreted. This is an uncharacterized protein from Dictyostelium discoideum (Social amoeba).